A 110-amino-acid chain; its full sequence is Large ribosomal subunit protein uL22 (110 aa).

It belongs to the universal ribosomal protein uL22 family. Part of the 50S ribosomal subunit.

Its function is as follows. This protein binds specifically to 23S rRNA; its binding is stimulated by other ribosomal proteins, e.g. L4, L17, and L20. It is important during the early stages of 50S assembly. It makes multiple contacts with different domains of the 23S rRNA in the assembled 50S subunit and ribosome. In terms of biological role, the globular domain of the protein is located near the polypeptide exit tunnel on the outside of the subunit, while an extended beta-hairpin is found that lines the wall of the exit tunnel in the center of the 70S ribosome. The chain is Large ribosomal subunit protein uL22 from Nitrosococcus oceani (strain ATCC 19707 / BCRC 17464 / JCM 30415 / NCIMB 11848 / C-107).